A 717-amino-acid chain; its full sequence is Polyribonucleotide nucleotidyltransferase (717 aa).

Mg(2+) is bound by residues aspartate 487 and aspartate 493. The KH domain occupies 554–613 (PRITVINVPKDKIRDVIGTGGKVIREIVEYSGCKIDIEDDGTIKIAATSDEQAQKAIDRI). The 69-residue stretch at 623-691 (GQIYTGKVVK…DRGKVKLSMR (69 aa)) folds into the S1 motif domain.

The protein belongs to the polyribonucleotide nucleotidyltransferase family. Requires Mg(2+) as cofactor.

The protein resides in the cytoplasm. The enzyme catalyses RNA(n+1) + phosphate = RNA(n) + a ribonucleoside 5'-diphosphate. Involved in mRNA degradation. Catalyzes the phosphorolysis of single-stranded polyribonucleotides processively in the 3'- to 5'-direction. The protein is Polyribonucleotide nucleotidyltransferase of Acidiphilium cryptum (strain JF-5).